Consider the following 243-residue polypeptide: Orotidine 5'-phosphate decarboxylase (243 aa).

Residues D18, K39, D66–T75, T130, R192, Q201, G221, and R222 each bind substrate. K68 serves as the catalytic Proton donor.

It belongs to the OMP decarboxylase family. Type 1 subfamily. Homodimer.

It catalyses the reaction orotidine 5'-phosphate + H(+) = UMP + CO2. It participates in pyrimidine metabolism; UMP biosynthesis via de novo pathway; UMP from orotate: step 2/2. In terms of biological role, catalyzes the decarboxylation of orotidine 5'-monophosphate (OMP) to uridine 5'-monophosphate (UMP). This is Orotidine 5'-phosphate decarboxylase from Synechococcus sp. (strain CC9902).